The chain runs to 174 residues: Superoxide dismutase [Cu-Zn] (174 aa).

Residues 1 to 20 (MMKSLFIASTMVLMAFPAFA) form the signal peptide. Residues histidine 68, histidine 70, and histidine 93 each contribute to the Cu cation site. Cysteine 75 and cysteine 170 form a disulfide bridge. Zn(2+)-binding residues include histidine 93, histidine 102, histidine 110, and aspartate 113. Residue histidine 148 coordinates Cu cation.

Belongs to the Cu-Zn superoxide dismutase family. In terms of assembly, homodimer. Cu cation serves as cofactor. It depends on Zn(2+) as a cofactor.

The protein localises to the periplasm. It catalyses the reaction 2 superoxide + 2 H(+) = H2O2 + O2. Its function is as follows. Destroys radicals which are normally produced within the cells and which are toxic to biological systems. This Brucella melitensis biotype 1 (strain ATCC 23456 / CCUG 17765 / NCTC 10094 / 16M) protein is Superoxide dismutase [Cu-Zn] (sodC).